The following is a 73-amino-acid chain: UPF0270 protein PMI2817 (73 aa).

The protein belongs to the UPF0270 family.

The chain is UPF0270 protein PMI2817 from Proteus mirabilis (strain HI4320).